Here is a 449-residue protein sequence, read N- to C-terminus: Clusterin (449 aa).

The N-terminal stretch at 1 to 21 (MKTLLLLVGLLLTLENGQVLG) is a signal peptide. Positions 77 to 80 (KKKK) match the Nuclear localization signal motif. Residues Asn-85 and Asn-102 are each glycosylated (N-linked (GlcNAc...) asparagine). 5 disulfide bridges follow: Cys-101-Cys-313, Cys-112-Cys-305, Cys-115-Cys-302, Cys-120-Cys-295, and Cys-128-Cys-285. Ser-132 bears the Phosphoserine mark. N-linked (GlcNAc...) asparagine glycans are attached at residues Asn-144, Asn-291, Asn-328, Asn-354, and Asn-374. Ser-396 carries the post-translational modification Phosphoserine. Residues 443–447 (RQKNR) carry the Nuclear localization signal motif.

This sequence belongs to the clusterin family. As to quaternary structure, antiparallel disulfide-linked heterodimer of an alpha chain and a beta chain. Self-associates and forms higher oligomers. Interacts with a broad range of misfolded proteins, including APP, APOC2 and LYZ. Slightly acidic pH promotes interaction with misfolded proteins. Forms high-molecular weight oligomers upon interaction with misfolded proteins. Interacts with APOA1, LRP2, CLUAP1 and PON1. Interacts with the complement membrane attack complex. Interacts (via alpha chain) with XRCC6. Interacts with SYVN1, COMMD1, BTRC, CUL1 and with ubiquitin and SCF (SKP1-CUL1-F-box protein) E3 ubiquitin-protein ligase complexes. Interacts (via alpha chain) with BAX in stressed cells, where BAX undergoes a conformation change leading to association with the mitochondrial membrane. Does not interact with BAX in unstressed cells. Found in a complex with LTF, CLU, EPPIN and SEMG1. Interacts (immaturely glycosylated pre-secreted form) with HSPA5; this interaction promotes CLU stability and facilitates stress-induced CLU retrotranslocation from the secretory pathway to the mitochondria, thereby reducing stress-induced apoptosis by stabilizing mitochondrial membrane integrity. Interacts with BCL2L1; this interaction releases and activates BAX and promotes cell death. Interacts with TGFBR2 and ACVR1. Interacts (secreted form) with STMN3; this interaction may act as an important modulator during neuronal differentiation. Interacts with VLDLR and LRP8. In terms of processing, proteolytically cleaved on its way through the secretory system, probably within the Golgi lumen. Proteolytic cleavage is not necessary for its chaperone activity. All non-secreted forms are not proteolytically cleaved. Chaperone activity of uncleaved forms is dependent on a non-reducing environment. Post-translationally, polyubiquitinated, leading to proteasomal degradation. Under cellular stress, the intracellular level of cleaved form is reduced due to proteasomal degradation. Heavily N-glycosylated. About 30% of the protein mass is comprised of complex N-linked carbohydrate. Endoplasmic reticulum (ER) stress induces changes in glycosylation status and increases level of hypoglycosylated forms. Core carbohydrates are essential for chaperone activity. Non-secreted forms are hypoglycosylated or unglycosylated.

The protein localises to the secreted. It is found in the nucleus. The protein resides in the cytoplasm. It localises to the mitochondrion membrane. Its subcellular location is the cytosol. The protein localises to the microsome. It is found in the endoplasmic reticulum. The protein resides in the mitochondrion. It localises to the perinuclear region. Its subcellular location is the cytoplasmic vesicle. The protein localises to the secretory vesicle. It is found in the chromaffin granule. Functionally, functions as extracellular chaperone that prevents aggregation of non native proteins. Prevents stress-induced aggregation of blood plasma proteins. Inhibits formation of amyloid fibrils by APP, APOC2, B2M, CALCA, CSN3, SNCA and aggregation-prone LYZ variants (in vitro). Does not require ATP. Maintains partially unfolded proteins in a state appropriate for subsequent refolding by other chaperones, such as HSPA8/HSC70. Does not refold proteins by itself. Binding to cell surface receptors triggers internalization of the chaperone-client complex and subsequent lysosomal or proteasomal degradation. When secreted, protects cells against apoptosis and against cytolysis by complement: inhibits assembly of the complement membrane attack complex (MAC) by preventing polymerization of C9 pore component of the MAC complex. Intracellular forms interact with ubiquitin and SCF (SKP1-CUL1-F-box protein) E3 ubiquitin-protein ligase complexes and promote the ubiquitination and subsequent proteasomal degradation of target proteins. Promotes proteasomal degradation of COMMD1 and IKBKB. Modulates NF-kappa-B transcriptional activity. Following stress, promotes apoptosis. Inhibits apoptosis when associated with the mitochondrial membrane by interference with BAX-dependent release of cytochrome c into the cytoplasm. Plays a role in the regulation of cell proliferation. An intracellular form suppresses stress-induced apoptosis by stabilizing mitochondrial membrane integrity through interaction with HSPA5. Secreted form does not affect caspase or BAX-mediated intrinsic apoptosis and TNF-induced NF-kappa-B-activity. Secreted form act as an important modulator during neuronal differentiation through interaction with STMN3. Plays a role in the clearance of immune complexes that arise during cell injury. The sequence is that of Clusterin (CLU) from Equus caballus (Horse).